The primary structure comprises 574 residues: Isocitrate dehydrogenase kinase/phosphatase (574 aa).

ATP-binding positions include 315-321 and Lys336; that span reads APGIRGM. The active site involves Asp371.

The protein belongs to the AceK family.

It is found in the cytoplasm. It carries out the reaction L-seryl-[isocitrate dehydrogenase] + ATP = O-phospho-L-seryl-[isocitrate dehydrogenase] + ADP + H(+). Its function is as follows. Bifunctional enzyme which can phosphorylate or dephosphorylate isocitrate dehydrogenase (IDH) on a specific serine residue. This is a regulatory mechanism which enables bacteria to bypass the Krebs cycle via the glyoxylate shunt in response to the source of carbon. When bacteria are grown on glucose, IDH is fully active and unphosphorylated, but when grown on acetate or ethanol, the activity of IDH declines drastically concomitant with its phosphorylation. This is Isocitrate dehydrogenase kinase/phosphatase from Escherichia coli O127:H6 (strain E2348/69 / EPEC).